We begin with the raw amino-acid sequence, 239 residues long: UDP-2,3-diacylglucosamine hydrolase (239 aa).

The Mn(2+) site is built by Asp-8, His-10, Asp-41, Asn-78, and His-113. 78–79 (NR) lines the substrate pocket. Residues Asp-121, Ser-159, Asn-163, Lys-166, and His-194 each contribute to the substrate site. Residues His-194 and His-196 each contribute to the Mn(2+) site.

This sequence belongs to the LpxH family. It depends on Mn(2+) as a cofactor.

The protein resides in the cell inner membrane. It catalyses the reaction UDP-2-N,3-O-bis[(3R)-3-hydroxytetradecanoyl]-alpha-D-glucosamine + H2O = 2-N,3-O-bis[(3R)-3-hydroxytetradecanoyl]-alpha-D-glucosaminyl 1-phosphate + UMP + 2 H(+). It participates in glycolipid biosynthesis; lipid IV(A) biosynthesis; lipid IV(A) from (3R)-3-hydroxytetradecanoyl-[acyl-carrier-protein] and UDP-N-acetyl-alpha-D-glucosamine: step 4/6. Functionally, hydrolyzes the pyrophosphate bond of UDP-2,3-diacylglucosamine to yield 2,3-diacylglucosamine 1-phosphate (lipid X) and UMP by catalyzing the attack of water at the alpha-P atom. Involved in the biosynthesis of lipid A, a phosphorylated glycolipid that anchors the lipopolysaccharide to the outer membrane of the cell. This chain is UDP-2,3-diacylglucosamine hydrolase, found in Shewanella sp. (strain MR-7).